Here is a 529-residue protein sequence, read N- to C-terminus: Bifunctional purine biosynthesis protein PurH (529 aa).

Positions 2-148 constitute an MGS-like domain; the sequence is QQLRPIHRAL…KNHKDVAIVV (147 aa).

It belongs to the PurH family.

The enzyme catalyses (6R)-10-formyltetrahydrofolate + 5-amino-1-(5-phospho-beta-D-ribosyl)imidazole-4-carboxamide = 5-formamido-1-(5-phospho-D-ribosyl)imidazole-4-carboxamide + (6S)-5,6,7,8-tetrahydrofolate. The catalysed reaction is IMP + H2O = 5-formamido-1-(5-phospho-D-ribosyl)imidazole-4-carboxamide. The protein operates within purine metabolism; IMP biosynthesis via de novo pathway; 5-formamido-1-(5-phospho-D-ribosyl)imidazole-4-carboxamide from 5-amino-1-(5-phospho-D-ribosyl)imidazole-4-carboxamide (10-formyl THF route): step 1/1. It functions in the pathway purine metabolism; IMP biosynthesis via de novo pathway; IMP from 5-formamido-1-(5-phospho-D-ribosyl)imidazole-4-carboxamide: step 1/1. The polypeptide is Bifunctional purine biosynthesis protein PurH (Photorhabdus laumondii subsp. laumondii (strain DSM 15139 / CIP 105565 / TT01) (Photorhabdus luminescens subsp. laumondii)).